A 127-amino-acid chain; its full sequence is Large ribosomal subunit protein uL22 (127 aa).

Part of the 50S ribosomal subunit.

In terms of biological role, this protein binds specifically to 23S rRNA; its binding is stimulated by other ribosomal proteins, e.g. L4, L17, and L20. It is important during the early stages of 50S assembly. It makes multiple contacts with different domains of the 23S rRNA in the assembled 50S subunit and ribosome. The globular domain of the protein is located near the polypeptide exit tunnel on the outside of the subunit, while an extended beta-hairpin is found that lines the wall of the exit tunnel in the center of the 70S ribosome. This Rhodopseudomonas palustris (strain ATCC BAA-98 / CGA009) protein is Large ribosomal subunit protein uL22.